A 397-amino-acid chain; its full sequence is Phosphoglycerate kinase (397 aa).

Residues 21–23 (DFN), arginine 37, 60–63 (HLGR), arginine 119, and arginine 152 contribute to the substrate site. ATP is bound by residues lysine 203, glycine 294, glutamate 325, and 354 to 357 (GGDS).

It belongs to the phosphoglycerate kinase family. Monomer.

It is found in the cytoplasm. The catalysed reaction is (2R)-3-phosphoglycerate + ATP = (2R)-3-phospho-glyceroyl phosphate + ADP. It functions in the pathway carbohydrate degradation; glycolysis; pyruvate from D-glyceraldehyde 3-phosphate: step 2/5. The sequence is that of Phosphoglycerate kinase from Chlorobium luteolum (strain DSM 273 / BCRC 81028 / 2530) (Pelodictyon luteolum).